A 131-amino-acid chain; its full sequence is MINDLISDGLTRIRNASMRRLDTTKLLHSNVVEATLKILANKSYIESYNVVEEGNKKFINVVLKYDERGRSVINELKRVSKPGRRVYQGRDEIKRFKNGYGTIIVSTSKGVLSNDEAHKAGVGGEVLCTVW.

This sequence belongs to the universal ribosomal protein uS8 family. As to quaternary structure, part of the 30S ribosomal subunit. Contacts proteins S5 and S12.

Functionally, one of the primary rRNA binding proteins, it binds directly to 16S rRNA central domain where it helps coordinate assembly of the platform of the 30S subunit. The protein is Small ribosomal subunit protein uS8 of Campylobacter fetus subsp. fetus (strain 82-40).